Consider the following 104-residue polypeptide: Glycine-rich protein (104 aa).

The N-terminal stretch at methionine 1 to alanine 18 is a signal peptide.

It belongs to the non-disulfide-bridged peptide (NDBP) superfamily. As to expression, expressed by the venom gland.

The protein resides in the secreted. In Lychas mucronatus (Chinese swimming scorpion), this protein is Glycine-rich protein.